The following is a 938-amino-acid chain: AP-2 complex subunit alpha-2 (938 aa).

Residues 11–12 (RG), Lys-43, Tyr-53, and 57–61 (KYVCK) contribute to the a 1,2-diacyl-sn-glycero-3-phospho-(1D-myo-inositol-3,4,5-trisphosphate) site. A disordered region spans residues 615–681 (LKKKKGPSTV…TGPPPSSGGG (67 aa)). Over residues 646-667 (PASTSAASTPSPSADLLGLGAV) the composition is skewed to low complexity. The segment covering 668 to 677 (PPAPTGPPPS) has biased composition (pro residues).

The protein belongs to the adaptor complexes large subunit family. In terms of assembly, adaptor protein complex 2 (AP-2) is a heterotetramer composed of two large adaptins (alpha-type subunit AP2A1 or AP2A2 and beta-type subunit AP2B1), a medium adaptin (mu-type subunit AP2M1) and a small adaptin (sigma-type subunit AP2S1). Interacts with clathrin. Binds EPN1, EPS15, AMPH, SNAP91 and BIN1. Interacts with HIP1. Interacts with DGKD. Interacts with DENND1A, DENND1B and DENND1C. Interacts with FCHO1 and DAB2. Interacts with ATAT1; this interaction is required for efficient alpha-tubulin acetylation by ATAT1. Interacts with KIAA1107. Together with AP2B1 and AP2M1, it interacts with ADAM10; this interaction facilitates ADAM10 endocytosis from the plasma membrane during long-term potentiation in hippocampal neurons. Interacts with CLN3 (via dileucine motif). Interacts with ABCB11; this interaction regulates cell membrane expression of ABCB11 through its internalization in a clathrin-dependent manner and its subsequent degradation. Interacts with Cacfd1. Interacts with DNAJC6. In terms of tissue distribution, widely expressed.

The protein localises to the cell membrane. It localises to the membrane. Its subcellular location is the coated pit. In terms of biological role, component of the adaptor protein complex 2 (AP-2). Adaptor protein complexes function in protein transport via transport vesicles in different membrane traffic pathways. Adaptor protein complexes are vesicle coat components and appear to be involved in cargo selection and vesicle formation. AP-2 is involved in clathrin-dependent endocytosis in which cargo proteins are incorporated into vesicles surrounded by clathrin (clathrin-coated vesicles, CCVs) which are destined for fusion with the early endosome. The clathrin lattice serves as a mechanical scaffold but is itself unable to bind directly to membrane components. Clathrin-associated adaptor protein (AP) complexes which can bind directly to both the clathrin lattice and to the lipid and protein components of membranes are considered to be the major clathrin adaptors contributing the CCV formation. AP-2 also serves as a cargo receptor to selectively sort the membrane proteins involved in receptor-mediated endocytosis. AP-2 seems to play a role in the recycling of synaptic vesicle membranes from the presynaptic surface. AP-2 recognizes Y-X-X-[FILMV] (Y-X-X-Phi) and [ED]-X-X-X-L-[LI] endocytosis signal motifs within the cytosolic tails of transmembrane cargo molecules. AP-2 may also play a role in maintaining normal post-endocytic trafficking through the ARF6-regulated, non-clathrin pathway. During long-term potentiation in hippocampal neurons, AP-2 is responsible for the endocytosis of ADAM10. The AP-2 alpha subunit binds polyphosphoinositide-containing lipids, positioning AP-2 on the membrane. The AP-2 alpha subunit acts via its C-terminal appendage domain as a scaffolding platform for endocytic accessory proteins. The AP-2 alpha and AP-2 sigma subunits are thought to contribute to the recognition of the [ED]-X-X-X-L-[LI] motif. The chain is AP-2 complex subunit alpha-2 from Rattus norvegicus (Rat).